The primary structure comprises 445 residues: Phosphoglucosamine mutase (445 aa).

Ser-101 (phosphoserine intermediate) is an active-site residue. Positions 101, 240, 242, and 244 each coordinate Mg(2+). A Phosphoserine modification is found at Ser-101.

This sequence belongs to the phosphohexose mutase family. The cofactor is Mg(2+). Post-translationally, activated by phosphorylation.

The catalysed reaction is alpha-D-glucosamine 1-phosphate = D-glucosamine 6-phosphate. Functionally, catalyzes the conversion of glucosamine-6-phosphate to glucosamine-1-phosphate. The polypeptide is Phosphoglucosamine mutase (Azotobacter vinelandii (strain DJ / ATCC BAA-1303)).